The sequence spans 179 residues: Adenine phosphoribosyltransferase (179 aa).

Belongs to the purine/pyrimidine phosphoribosyltransferase family. Homodimer.

The protein resides in the cytoplasm. It catalyses the reaction AMP + diphosphate = 5-phospho-alpha-D-ribose 1-diphosphate + adenine. The protein operates within purine metabolism; AMP biosynthesis via salvage pathway; AMP from adenine: step 1/1. Functionally, catalyzes a salvage reaction resulting in the formation of AMP, that is energically less costly than de novo synthesis. This Bradyrhizobium sp. (strain BTAi1 / ATCC BAA-1182) protein is Adenine phosphoribosyltransferase.